The following is an 814-amino-acid chain: Rho GTPase-activating protein 26 (814 aa).

A BAR domain is found at 7-262; the sequence is EFSDCCLDSP…MKENPLEHKT (256 aa). Residues 265–369 form the PH domain; sequence PYTMEGYLYV…WMEAMDGREP (105 aa). In terms of domain architecture, Rho-GAP spans 383-568; it reads AQLDSIGFSI…ILIENHEKIF (186 aa). Positions 624-648 are enriched in low complexity; it reads LESVSSNPNSILNSSSSLQPNMNSS. Residues 624–696 form a disordered region; it reads LESVSSNPNS…MPTSSTSSDS (73 aa). Pro residues predominate over residues 662-672; it reads SLPPNPSPTSP. Ser-668 carries the phosphoserine modification. Thr-670 is modified (phosphothreonine). Phosphoserine is present on Ser-671. The segment covering 673-696 has biased composition (low complexity); that stretch reads LSPSWPMFSAPSSPMPTSSTSSDS. Positions 756–814 constitute an SH3 domain; sequence TPFRKAKALYACKAEHDSELSFTAGTVFDNVHPSQEPGWLEGTLNGKTGLIPENYVEFL.

Interacts with NYAP1, NYAP2 and MYO16. Interacts with MICAL1 and WDR44. Binds to the C-terminus of PTK2/FAK1. In terms of assembly, (Microbial infection) Interacts with human parainfluenza virus type 2 proteins P and V. Phosphorylated in a PINK1-dependent fashion promoting retrograde mitochondrial trafficking and clustering.

Its subcellular location is the endosome membrane. It localises to the cytoplasm. The protein resides in the cell junction. The protein localises to the focal adhesion. It is found in the cytoskeleton. Functionally, GTPase-activating protein for RHOA and CDC42. Facilitates mitochondrial quality control by promoting Parkin-mediated recruitment of autophagosomes to damaged mitochondria. Negatively regulates the growth of human parainfluenza virus type 2 by inhibiting hPIV-2-mediated RHOA activation via interaction with two of its viral proteins P and V. Associates with MICAL1 on the endosomal membrane to promote Rab8-Rab10-dependent tubule extension. After dissociation of MICAL1, recruits WDR44 which connects the endoplasmic reticulum (ER) with the endosomal tubule, thereby participating in the export of a subset of neosynthesized proteins. This is Rho GTPase-activating protein 26 (ARHGAP26) from Homo sapiens (Human).